A 663-amino-acid chain; its full sequence is MFATFNSSMDNRSSANSPVAPSSRPKRTTVARACDWCRLNRVKCDDGQPCKNCRTRGVRCRKGSKSGEHNRPSSSAAASERARSQGAQMEPNQGNARAEEREKAATTSRRNSRTPSSSPSSPSPSQWRWPGAWIVDSVHTNSEPRYYGPSSFLHFTNRLRIYLDESLGQPQLGNALLSFTCSRVSSPSPNAMDDADLTEGTLTRQQEEYLLSLYWQSYHTIIPIVDADDFCAHYRSLWEPGQGATRRPSALVDIVLALCMQYSAALMASGDIELMDLESNDTNASGHWLYQRCQRLLLKDQDTLSLATLQTYIHSAVYLMNASCLNASHRVLSIAIHTATSLGLPHSPEGHPRGPQHALRQRIWWTLFFLDSKMSFELGQPYLMPEYHGTVDLSGSLELRIIENCRSVSTFGDITWLRYHDECLKLTSKVRHISNVAFEKSSEAMSRHSGTSIYENPSALEKGVSYLHKSMEALQAWSREVPTSLKLARKGNVSPFSTARCPLENDVYAPLWLQRQRVLLELLYHNLVMGLYRPYIRVADQSAVTSHAIGPTASHTSDSSSLCALNHAMATINIVYQVLTETDILNSWNRAFQYTWDATLTVLGFRLVHPGCPHSFSARRATAIANESFKIFSQYGYSGAAQAMTVTRELDRSIDLAVSREPG.

Over residues 1–20 the composition is skewed to polar residues; it reads MFATFNSSMDNRSSANSPVA. Disordered stretches follow at residues 1 to 28 and 55 to 126; these read MFATFNSSMDNRSSANSPVAPSSRPKRT and TRGV…SPSQ. Positions 34 to 60 form a DNA-binding region, zn(2)-C6 fungal-type; that stretch reads CDWCRLNRVKCDDGQPCKNCRTRGVRC. Residues 55 to 64 show a composition bias toward basic residues; it reads TRGVRCRKGS. Composition is skewed to low complexity over residues 73–88 and 105–125; these read SSSAAASERARSQGAQ and ATTSRRNSRTPSSSPSSPSPS.

The protein localises to the nucleus. Functionally, transcription factor that regulates the expression of the gene cluster that mediates the biosynthesis of terreic acid, a quinone epoxide inhibitor of Bruton's tyrosine kinase. This is Terreic acid cluster-specific transcription factor atF from Aspergillus terreus (strain NIH 2624 / FGSC A1156).